Consider the following 103-residue polypeptide: Putative membrane protein insertion efficiency factor (103 aa).

Belongs to the UPF0161 family.

The protein resides in the cell inner membrane. In terms of biological role, could be involved in insertion of integral membrane proteins into the membrane. This is Putative membrane protein insertion efficiency factor from Chlamydia abortus (strain DSM 27085 / S26/3) (Chlamydophila abortus).